A 214-amino-acid chain; its full sequence is Holliday junction branch migration complex subunit RuvA (214 aa).

The interval 1 to 63 (MISSLRGTVL…EDSLTLFGFP (63 aa)) is domain I. The segment at 64-139 (GPDELRAFEL…KLFVTQPRAR (76 aa)) is domain II. Residues 139 to 143 (RSATS) form a flexible linker region. Residues 144–214 (AASTVTADVV…AAPTGQAADR (71 aa)) are domain III.

It belongs to the RuvA family. Homotetramer. Forms an RuvA(8)-RuvB(12)-Holliday junction (HJ) complex. HJ DNA is sandwiched between 2 RuvA tetramers; dsDNA enters through RuvA and exits via RuvB. An RuvB hexamer assembles on each DNA strand where it exits the tetramer. Each RuvB hexamer is contacted by two RuvA subunits (via domain III) on 2 adjacent RuvB subunits; this complex drives branch migration. In the full resolvosome a probable DNA-RuvA(4)-RuvB(12)-RuvC(2) complex forms which resolves the HJ.

It is found in the cytoplasm. In terms of biological role, the RuvA-RuvB-RuvC complex processes Holliday junction (HJ) DNA during genetic recombination and DNA repair, while the RuvA-RuvB complex plays an important role in the rescue of blocked DNA replication forks via replication fork reversal (RFR). RuvA specifically binds to HJ cruciform DNA, conferring on it an open structure. The RuvB hexamer acts as an ATP-dependent pump, pulling dsDNA into and through the RuvAB complex. HJ branch migration allows RuvC to scan DNA until it finds its consensus sequence, where it cleaves and resolves the cruciform DNA. The polypeptide is Holliday junction branch migration complex subunit RuvA (Clavibacter michiganensis subsp. michiganensis (strain NCPPB 382)).